The primary structure comprises 273 residues: Hemin import ATP-binding protein HmuV (273 aa).

An ABC transporter domain is found at 2-256 (LTAHHLDVAR…AHIAQCYGFA (255 aa)). 34-41 (GRNGAGKS) serves as a coordination point for ATP.

This sequence belongs to the ABC transporter superfamily. Heme (hemin) importer (TC 3.A.1.14.5) family. In terms of assembly, the complex is composed of two ATP-binding proteins (HmuV), two transmembrane proteins (HmuU) and a solute-binding protein (HmuT).

It is found in the cell inner membrane. Functionally, part of the ABC transporter complex HmuTUV involved in hemin import. Responsible for energy coupling to the transport system. This Burkholderia ambifaria (strain ATCC BAA-244 / DSM 16087 / CCUG 44356 / LMG 19182 / AMMD) (Burkholderia cepacia (strain AMMD)) protein is Hemin import ATP-binding protein HmuV.